Here is a 173-residue protein sequence, read N- to C-terminus: Large ribosomal subunit protein uL10 (173 aa).

This sequence belongs to the universal ribosomal protein uL10 family. Part of the ribosomal stalk of the 50S ribosomal subunit. The N-terminus interacts with L11 and the large rRNA to form the base of the stalk. The C-terminus forms an elongated spine to which L12 dimers bind in a sequential fashion forming a multimeric L10(L12)X complex.

In terms of biological role, forms part of the ribosomal stalk, playing a central role in the interaction of the ribosome with GTP-bound translation factors. The chain is Large ribosomal subunit protein uL10 from Geobacter sp. (strain M21).